The following is a 556-amino-acid chain: MDKRHDPSRRIIAPHGTQLQCKSWLTEAAMRMLMNNLHPDVAERPEDLVVYGGIGRAARDWQSYDKIIEVLKRLEDDQTLLVQSGKPVGVFTTHSNAPRVIIANSNLVPHWANWEHFNELDKKGLAMYGQMTAGSWIYIGSQGIVQGTYETFVAMAKQHFNGSSAGKWILTGGLGGMGGAQPLAGTMAGYSVLTCEVDETRIDFRMRTGYVDKKATSLDQALAMIYAANQSGKPVSVGLLANAADVFTELVTRGIVPDVVTDQTSAHDPLNGYLPQGWSLEYAAKMRKTDEAAVVKAAKQSMAVQVRAMLALQAAGAATTDYGNNIRQMAFEEGVTNAFDFPGFVPAYVRPLFCEGIGPFRWVALSGDPEDIYKTDAKVKELIPDNPQLHNWLDMARERIAFQGLPARICWVGLKDRARLALAFNEMVKNGELSAPIVIGRDHLDSGSVASPNRETEAMLDGSDAVSDWPLMNALLNTASGATWVSLHHGGGVGMGFSQHSGVVIVADGTDEAAVRLGRVLWNDPATGVMRHADAGYDIAKNCAKEQGLDLPMLGA.

Residues 52–53 (GG), glutamine 130, 176–178 (GMG), glutamate 196, arginine 201, 242–243 (NA), 263–267 (QTSAH), 273–274 (YL), and tyrosine 322 each bind NAD(+). Cysteine 410 is a catalytic residue. Glycine 492 contacts NAD(+).

Belongs to the urocanase family. NAD(+) serves as cofactor.

It localises to the cytoplasm. The catalysed reaction is 4-imidazolone-5-propanoate = trans-urocanate + H2O. The protein operates within amino-acid degradation; L-histidine degradation into L-glutamate; N-formimidoyl-L-glutamate from L-histidine: step 2/3. Its function is as follows. Catalyzes the conversion of urocanate to 4-imidazolone-5-propionate. The polypeptide is Urocanate hydratase (Shewanella frigidimarina (strain NCIMB 400)).